A 201-amino-acid polypeptide reads, in one-letter code: MSYLGVGVSPGNVSGSTTKMKLIDRKVRVTELILRCLVCVLALVAAILIATDVQVREIFMIQKKAKFTDMKALVLLVVVNGIAAGYSLVQAVRCVVGLMKGRVLFSKPLAWAIFFGDQAVAYLCVAGVAAAAQSAAFAKLGEPELQWMKICNMYGKFCNQVGEGIASALFACIGMVLISCISAFGVFRLYGGSKSRPSSRW.

Residues 1 to 28 are Cytoplasmic-facing; it reads MSYLGVGVSPGNVSGSTTKMKLIDRKVR. Residues 29–49 traverse the membrane as a helical segment; the sequence is VTELILRCLVCVLALVAAILI. Over 50–71 the chain is Extracellular; the sequence is ATDVQVREIFMIQKKAKFTDMK. The helical transmembrane segment at 72 to 92 threads the bilayer; sequence ALVLLVVVNGIAAGYSLVQAV. At 93-108 the chain is on the cytoplasmic side; the sequence is RCVVGLMKGRVLFSKP. The helical transmembrane segment at 109 to 129 threads the bilayer; the sequence is LAWAIFFGDQAVAYLCVAGVA. The Extracellular segment spans residues 130-166; that stretch reads AAAQSAAFAKLGEPELQWMKICNMYGKFCNQVGEGIA. Residues 167 to 187 traverse the membrane as a helical segment; sequence SALFACIGMVLISCISAFGVF. Residues 188–201 lie on the Cytoplasmic side of the membrane; it reads RLYGGSKSRPSSRW.

The protein belongs to the Casparian strip membrane proteins (CASP) family. As to quaternary structure, homodimer and heterodimers.

The protein resides in the cell membrane. The sequence is that of CASP-like protein 2B2 from Arabidopsis thaliana (Mouse-ear cress).